Reading from the N-terminus, the 876-residue chain is Alanine--tRNA ligase (876 aa).

H564, H568, C666, and H670 together coordinate Zn(2+).

It belongs to the class-II aminoacyl-tRNA synthetase family. Homotetramer. Zn(2+) is required as a cofactor.

The protein localises to the cytoplasm. It catalyses the reaction tRNA(Ala) + L-alanine + ATP = L-alanyl-tRNA(Ala) + AMP + diphosphate. Its function is as follows. Catalyzes the attachment of alanine to tRNA(Ala) in a two-step reaction: alanine is first activated by ATP to form Ala-AMP and then transferred to the acceptor end of tRNA(Ala). Also edits incorrectly charged Ser-tRNA(Ala) and Gly-tRNA(Ala) via its editing domain. This is Alanine--tRNA ligase from Salmonella paratyphi A (strain ATCC 9150 / SARB42).